We begin with the raw amino-acid sequence, 330 residues long: Inactive hydroxysteroid dehydrogenase-like protein 1 (330 aa).

The residue at position 2 (Ala2) is an N-acetylalanine. The tract at residues 2-82 is required for mitochondria translocation; that stretch reads AAVDSFYLLY…SGATDGIGKA (81 aa). Residues 74-80, Asp125, and Lys222 contribute to the NADP(+) site; that span reads GATDGIG.

It belongs to the short-chain dehydrogenases/reductases (SDR) family. 17-beta-HSD 3 subfamily. As to quaternary structure, interacts with STYXL1. As to expression, highly expressed in testis and ovary. Also detected in thyroid, spinal cord, adrenal gland, heart, placenta, skeletal muscle, small intestine, colon, spleen, prostate and pancreas.

It localises to the mitochondrion. This Homo sapiens (Human) protein is Inactive hydroxysteroid dehydrogenase-like protein 1 (HSDL1).